We begin with the raw amino-acid sequence, 1019 residues long: Collagen alpha-1(VI) chain (1019 aa).

The signal sequence occupies residues 1–19; that stretch reads MGLHDSFLALLLLLGGAWA. The VWFA 1 domain occupies 37–233; sequence DLFFVLDTSE…LDVEETINNI (197 aa). An N-linked (GlcNAc...) asparagine glycan is attached at Asn212. Residues 248 to 588 form a disordered region; that stretch reads FECHPPRGPP…GPPGPVGPPG (341 aa). The span at 253–262 shows a compositional bias: pro residues; that stretch reads PRGPPGPPGD. Composition is skewed to basic and acidic residues over residues 299–332 and 370–380; these read KGDK…DGMK and GKGEPGEDGKP. Low complexity predominate over residues 427–436; sequence ERGPPGSPGD. The Cell attachment site motif lies at 476–478; that stretch reads RGD. Asn514 is a glycosylation site (N-linked (GlcNAc...) asparagine). The short motif at 529-531 is the Cell attachment site element; it reads RGD. Asn535 is a glycosylation site (N-linked (GlcNAc...) asparagine). The span at 577 to 588 shows a compositional bias: pro residues; sequence RPGPPGPVGPPG. 2 VWFA domains span residues 613–800 and 824–1012; these read DLLF…LQNI and DIML…YQTV. 2 N-linked (GlcNAc...) asparagine glycosylation sites follow: Asn799 and Asn887.

It belongs to the type VI collagen family. Trimers composed of three different chains: alpha 1(VI), alpha 2(VI), and alpha 3(VI). Prolines at the third position of the tripeptide repeating unit (G-X-Y) are hydroxylated in some or all of the chains.

The protein localises to the secreted. Its subcellular location is the extracellular space. The protein resides in the extracellular matrix. In terms of biological role, collagen VI acts as a cell-binding protein. In Gallus gallus (Chicken), this protein is Collagen alpha-1(VI) chain (COL6A1).